The chain runs to 451 residues: V-type proton ATPase subunit S1 (451 aa).

An N-terminal signal peptide occupies residues 1-16 (MRVLFAVFSLIMACQA). Residues 17–407 (YDAVLFSNSR…DCTGTFSSGS (391 aa)) are Lumenal-facing. Asparagine 191, asparagine 235, asparagine 249, and asparagine 330 each carry an N-linked (GlcNAc...) asparagine glycan. The helical transmembrane segment at 408–428 (WMGIVSALVLIAGLMFGYVML) threads the bilayer. The Cytoplasmic portion of the chain corresponds to 429 to 451 (QSVQTMDRFDDPKQRQIVINVRE).

It belongs to the vacuolar ATPase subunit S1 family. In terms of assembly, accessory component of the multisubunit proton-transporting vacuolar (V)-ATPase protein pump. In terms of tissue distribution, expressed in pharynx, hypodermis, intestine, vulval hypodermis and the H-shape excretory cell.

The protein localises to the membrane. Functionally, accessory subunit of the proton-transporting vacuolar (V)-ATPase protein pump, which is required for luminal acidification of secretory vesicles. In the germline, required for the trafficking of the receptor RME-2 to the oocyte cell membrane where it regulates the uptake of yolk proteins. Also, plays an essential role in osmoregulation in the embryo, probably by regulating the proper formation of the eggshell. This Caenorhabditis elegans protein is V-type proton ATPase subunit S1.